Here is a 327-residue protein sequence, read N- to C-terminus: Beta-ketoacyl-[acyl-carrier-protein] synthase III 2 (327 aa).

Residues C114 and H251 contribute to the active site. The ACP-binding stretch occupies residues 252-256; that stretch reads SANLR. N281 is a catalytic residue.

The protein belongs to the thiolase-like superfamily. FabH family. In terms of assembly, homodimer.

It localises to the cytoplasm. It carries out the reaction malonyl-[ACP] + acetyl-CoA + H(+) = 3-oxobutanoyl-[ACP] + CO2 + CoA. It participates in lipid metabolism; fatty acid biosynthesis. Its function is as follows. Catalyzes the condensation reaction of fatty acid synthesis by the addition to an acyl acceptor of two carbons from malonyl-ACP. Catalyzes the first condensation reaction which initiates fatty acid synthesis and may therefore play a role in governing the total rate of fatty acid production. Possesses both acetoacetyl-ACP synthase and acetyl transacylase activities. Its substrate specificity determines the biosynthesis of branched-chain and/or straight-chain of fatty acids. The protein is Beta-ketoacyl-[acyl-carrier-protein] synthase III 2 of Bacillus anthracis.